The primary structure comprises 685 residues: Exocyst complex component 8 (685 aa).

The PH domain occupies 151 to 251; it reads YLVYNGDLTE…WLEILEQTKK (101 aa). A compositionally biased stretch (basic and acidic residues) spans 254–263; that stretch reads ALNEKQKQEE. Residues 254-273 are disordered; sequence ALNEKQKQEETTPQLPVVPE.

Belongs to the EXO84 family. In terms of assembly, the exocyst complex is composed of exoc1, exoc2, exoc3, exoc4, exoc5, exoc6, exoc7 and exoc8.

It localises to the cytoplasm. It is found in the perinuclear region. The protein localises to the cell projection. Its subcellular location is the growth cone. In terms of biological role, component of the exocyst complex involved in the docking of exocytic vesicles with fusion sites on the plasma membrane. The protein is Exocyst complex component 8 (exoc8) of Xenopus laevis (African clawed frog).